The primary structure comprises 365 residues: Methionine import ATP-binding protein MetN (365 aa).

The region spanning 17 to 256 is the ABC transporter domain; that stretch reads IVFEHVTKEF…PQSETTQRFL (240 aa). 53 to 60 contributes to the ATP binding site; sequence GHSGAGKS. The tract at residues 346–365 is disordered; sequence SNSAAPTTSATVPTPTEEAH.

This sequence belongs to the ABC transporter superfamily. Methionine importer (TC 3.A.1.24) family. As to quaternary structure, the complex is composed of two ATP-binding proteins (MetN), two transmembrane proteins (MetI) and a solute-binding protein (MetQ).

It localises to the cell membrane. It catalyses the reaction L-methionine(out) + ATP + H2O = L-methionine(in) + ADP + phosphate + H(+). The catalysed reaction is D-methionine(out) + ATP + H2O = D-methionine(in) + ADP + phosphate + H(+). Functionally, part of the ABC transporter complex MetNIQ involved in methionine import. Responsible for energy coupling to the transport system. The polypeptide is Methionine import ATP-binding protein MetN (Cutibacterium acnes (strain DSM 16379 / KPA171202) (Propionibacterium acnes)).